The sequence spans 178 residues: Beta-lytic metalloendopeptidase (178 aa).

Cysteine 65 and cysteine 111 are joined by a disulfide. Zn(2+)-binding residues include histidine 120 and histidine 122. Cysteine 155 and cysteine 168 are disulfide-bonded.

The protein belongs to the peptidase M23A family. The cofactor is Zn(2+).

It catalyses the reaction Cleavage of N-acetylmuramoyl-|-Ala, and of the insulin B chain at 23-Gly-|-Phe-24 &gt; 18-Val-|-Cys(SO3H).. This chain is Beta-lytic metalloendopeptidase, found in Lysobacter enzymogenes.